The chain runs to 727 residues: Plakophilin-1 (727 aa).

The segment at 1-235 (MNHSPLKTAL…SFSHSRASSK (235 aa)) is required for binding to single stranded DNA. The segment at 1–287 (MNHSPLKTAL…ESAKQQVYQL (287 aa)) is required for interaction with EIF4A1. The residue at position 4 (serine 4) is a Phosphoserine. The segment at 48 to 69 (TVKRQKSKSSQSSTLSHSNRGS) is disordered. 2 phosphorylation in this region is required for cytoplasmic localization and protein stabilization regions span residues 54–69 (SKSSQSSTLSHSNRGS) and 117–192 (RFSS…STCS). Residues serine 119, serine 120, serine 122, and serine 143 each carry the phosphoserine modification. The segment at 161-270 (YCDPRGTLRK…KCQAIGAYYI (110 aa)) is required for WNT-mediated nuclear localization. 9 ARM repeats span residues 244 to 275 (SGLTIPKAVQYLSSQDEKCQAIGAYYIQHTCF), 276 to 317 (QDES…NLVF), 318 to 360 (RSTT…NLSS), 361 to 412 (TDEL…GCLR), 413 to 443 (NLSSADVGRQTMRNYTGLIDSLMAYVQNCVA), 505 to 536 (NYDCPLPEEEPNPKGSSWLYHSDAVRTYLNLM), 537 to 583 (GKSK…IARL), 584 to 629 (LQSG…SHTG), and 630 to 693 (NTSN…DMWS).

This sequence belongs to the beta-catenin family. Part of a complex that contains DSG3, PKP1, YAP1 and YWHAG; the complex is required for localization of DSG3 and YAP1 to the cell membrane in keratinocytes. Interacts (via N-terminus) with KRT5/CK5, KRT8/CK8 (via rod domain), KRT15/CK15 and KRT18/CK18 (via rod domain) as part of intermediate filaments. Interacts with VIM (via rod domain). Interacts with DSP. Interacts with DES. Interacts with FXR1; the interaction may facilitate the binding of PKP1 to PKP2, PKP3 and DSP mRNA. Interacts (via N-terminus) with EIF4A1; the interaction promotes EIF4A1 recruitment to the cap-dependent translation complex and EIF4A1 ATPase activity. Interacts with TJP1/ZO-1; the interaction facilitates TJP1/ZO-1 localization to the plasma membrane. Interacts (when phosphorylated) with YWHAG; the interaction results in translocation of PKP1 to the cytoplasm and loss of intercellular adhesion in keratinocytes. Post-translationally, phosphorylated by AKT2; required for interaction with YWHAG and subsequent localization away from desmosomes to the cytoplasm. Phosphorylation of Ser-119 by AKT2 promotes PKP1-driven cap-dependent mRNA translation and decreases intercellular adhesion, phosphorylation is promoted by insulin. Phosphorylation by RIPK4 at the N-terminus is required for its role in differentiation of keratinocytes and DSG1 localization at cell junctions.

It is found in the nucleus. Its subcellular location is the cytoplasm. The protein localises to the perinuclear region. The protein resides in the cell junction. It localises to the desmosome. It is found in the cell membrane. Its subcellular location is the stress granule. Functionally, a component of desmosome cell-cell junctions which are required for positive regulation of cellular adhesion. Plays a role in desmosome protein expression regulation and localization to the desmosomal plaque, thereby maintaining cell sheet integrity and anchorage of desmosomes to intermediate filaments. Required for localization of DSG3 and YAP1 to the cell membrane in keratinocytes in response to mechanical strain, via the formation of an interaction complex composed of DSG3, YAP1, PKP1 and YWHAG. Positively regulates differentiation of keratinocytes, potentially via promoting localization of DSG1 at desmosome cell junctions. Required for calcium-independent development and maturation of desmosome plaques specifically at lateral cell-cell contacts in differentiating keratinocytes. Plays a role in the maintenance of DSG3 protein abundance, DSG3 clustering and localization of these clusters to the cell membrane in keratinocytes. May also promote keratinocyte proliferation and morphogenesis during postnatal development. Required for tight junction inside-out transepidermal barrier function of the skin. Promotes Wnt-mediated proliferation and differentiation of ameloblasts, via facilitating TJP1/ZO-1 localization to tight junctions. Binds single-stranded DNA (ssDNA), and may thereby play a role in sensing DNA damage and promoting cell survival. Positively regulates cap-dependent translation and as a result cell proliferation, via recruitment of EIF4A1 to the initiation complex and promotion of EIF4A1 ATPase activity. Regulates the mRNA stability and protein abundance of desmosome components PKP2, PKP3, DSC2 and DSP, potentially via its interaction with FXR1. May facilitate the formation of intermediate filaments. This is Plakophilin-1 (PKP1) from Bos taurus (Bovine).